The sequence spans 164 residues: Lipoprotein signal peptidase (164 aa).

The next 3 helical transmembrane spans lie at 12–32 (FLWL…WIVA), 70–90 (WLFT…LKET), and 93–113 (QQVM…GNVF). Catalysis depends on residues Asp123 and Asp141. The chain crosses the membrane as a helical span at residues 133–153 (YWPAFNVADSAICLGAFLLVI).

Belongs to the peptidase A8 family.

The protein localises to the cell inner membrane. The enzyme catalyses Release of signal peptides from bacterial membrane prolipoproteins. Hydrolyzes -Xaa-Yaa-Zaa-|-(S,diacylglyceryl)Cys-, in which Xaa is hydrophobic (preferably Leu), and Yaa (Ala or Ser) and Zaa (Gly or Ala) have small, neutral side chains.. The protein operates within protein modification; lipoprotein biosynthesis (signal peptide cleavage). Its function is as follows. This protein specifically catalyzes the removal of signal peptides from prolipoproteins. This is Lipoprotein signal peptidase from Pseudoalteromonas atlantica (strain T6c / ATCC BAA-1087).